The primary structure comprises 310 residues: Hairy/enhancer-of-split related with YRPW motif-like protein (310 aa).

The disordered stretch occupies residues 1-21 (MKRPHDYSSPDSDTDELIDVG). The span at 12 to 21 (SDTDELIDVG) shows a compositional bias: acidic residues. In terms of domain architecture, bHLH spans 43–98 (ARKKRRGIIEKRRRDRINHSLSELRRLVPSAFEKQGSSKLEKAEILQMTVDHLKLL). In terms of domain architecture, Orange spans 116–152 (YRTLGFRECVGEVVRYLSSLEGVESSDPIGARLVSHL). Low complexity-rich tracts occupy residues 182–192 (LQAASPPASST) and 261–273 (PSSS…SSPP). Disordered regions lie at residues 182-208 (LQAA…HGTA) and 248-310 (HRLQ…IGAF). Over residues 293 to 302 (LSSSSKSAQA) the composition is skewed to polar residues.

Belongs to the HEY family.

It localises to the nucleus. Functionally, transcriptional repressor which functions as a downstream effector of Notch signaling. The protein is Hairy/enhancer-of-split related with YRPW motif-like protein (heyl) of Danio rerio (Zebrafish).